The chain runs to 126 residues: Small ribosomal subunit protein uS12 (126 aa).

The tract at residues 1–28 is disordered; the sequence is MPTIQQLIRSERSKVQKKTKSPALKQCP. The residue at position 89 (aspartate 89) is a 3-methylthioaspartic acid. The disordered stretch occupies residues 104–126; sequence ATGVKDRKQGRSKYGTKREKAKK. Over residues 113 to 126 the composition is skewed to basic residues; sequence GRSKYGTKREKAKK.

Belongs to the universal ribosomal protein uS12 family. Part of the 30S ribosomal subunit. Contacts proteins S8 and S17. May interact with IF1 in the 30S initiation complex.

In terms of biological role, with S4 and S5 plays an important role in translational accuracy. Functionally, interacts with and stabilizes bases of the 16S rRNA that are involved in tRNA selection in the A site and with the mRNA backbone. Located at the interface of the 30S and 50S subunits, it traverses the body of the 30S subunit contacting proteins on the other side and probably holding the rRNA structure together. The combined cluster of proteins S8, S12 and S17 appears to hold together the shoulder and platform of the 30S subunit. This Synechocystis sp. (strain ATCC 27184 / PCC 6803 / Kazusa) protein is Small ribosomal subunit protein uS12.